A 3354-amino-acid chain; its full sequence is Cadherin-23 (3354 aa).

The N-terminal stretch at 1 to 23 (MRYSLVTCYAVLWLLMLVPGSWG) is a signal peptide. The Extracellular portion of the chain corresponds to 24–3064 (QVNRLPFFTN…SVQLPDDMSA (3041 aa)). 27 Cadherin domains span residues 34–132 (HFFD…APTF), 133–236 (HNQP…DPIF), 237–348 (INLP…APEF), 349–460 (NSSE…RPIF), 461–561 (SQPL…VPTF), 562–671 (QKDA…PPTF), 672–784 (SKPA…APYY), 779–890 (KDAP…DPTF), 891–995 (RNLP…TPTF), 996–1102 (FPAV…RPIF), 1103–1208 (LQSS…APVF), 1210–1313 (QQQY…AVQF), 1314–1418 (SNAS…SPRF), 1420–1527 (FTSD…PPVI), 1529–1634 (SPFG…APVF), 1635–1744 (QQPH…VPTF), 1745–1851 (PRDY…DPVL), 1852–1959 (LNLP…HPLF), 1960–2069 (TEGT…WPTF), 2070–2174 (SPPT…RPEF), 2175–2293 (LNPI…TPQF), 2297–2402 (GITY…NPIF), 2403–2509 (DQPS…RPQF), 2510–2611 (SKPQ…RPVF), 2614–2722 (PPNG…EPLF), 2729–2846 (SPQY…PPRF), and 2847–2975 (TKAE…EEEF). N-linked (GlcNAc...) asparagine glycosylation is found at asparagine 155 and asparagine 206. Asparagine 349, asparagine 393, asparagine 434, asparagine 466, asparagine 472, asparagine 602, asparagine 694, asparagine 765, asparagine 810, asparagine 827, asparagine 941, asparagine 1001, asparagine 1018, asparagine 1171, asparagine 1282, asparagine 1315, asparagine 1473, asparagine 1534, asparagine 1651, asparagine 1667, asparagine 1818, asparagine 1857, asparagine 1889, asparagine 1902, asparagine 2014, asparagine 2050, asparagine 2129, asparagine 2168, asparagine 2195, asparagine 2263, asparagine 2357, and asparagine 2369 each carry an N-linked (GlcNAc...) asparagine glycan. Asparagine 2578, asparagine 2616, asparagine 2749, asparagine 2808, asparagine 2877, asparagine 2896, asparagine 2941, and asparagine 2981 each carry an N-linked (GlcNAc...) asparagine glycan. A helical transmembrane segment spans residues 3065–3085 (LQMAIIVLAILLFLAAMLFVL). Residues 3086–3354 (MNWYYRTIHK…MESPLEITEL (269 aa)) lie on the Cytoplasmic side of the membrane.

In terms of assembly, interacts with USH1C and USH1G. antiparallel heterodimer with PCDH15. Isoform C1: Interacts with CAMSAP3; leading to inhibit CAMSAP3 ability to induce microtubule bundle formation. In terms of tissue distribution, in adult animals relatively high levels of expression are found in testis, skeletal muscle, heart, eye and thymus, and lower expression in kidney, lung and brain. Found in the sensory hair cells of the inner ear.

It is found in the cell membrane. Cadherins are calcium-dependent cell adhesion proteins. They preferentially interact with themselves in a homophilic manner in connecting cells. CDH23 is required for establishing and/or maintaining the proper organization of the stereocilia bundle of hair cells in the cochlea and the vestibule during late embryonic/early postnatal development. It is part of the functional network formed by USH1C, USH1G, CDH23 and MYO7A that mediates mechanotransduction in cochlear hair cells. Required for normal hearing. This chain is Cadherin-23 (Cdh23), found in Mus musculus (Mouse).